A 160-amino-acid polypeptide reads, in one-letter code: Cytosolic iron-sulfur assembly component 2A (160 aa).

Zn(2+)-binding residues include His-89, His-123, Glu-150, and Glu-153.

This sequence belongs to the MIP18 family. Monomer and homodimer. Component of the CIA complex. Interacts with CIAO1. Interacts with IREB2. Interacts with APAF1.

It is found in the cytoplasm. Functionally, component of the cytosolic iron-sulfur protein assembly (CIA) complex, a multiprotein complex that mediates the incorporation of iron-sulfur cluster into extramitochondrial Fe/S proteins. As a CIA complex component and in collaboration with CIAO1 specifically matures ACO1 and stabilizes IREB2, connecting cytosolic iron-sulfur protein maturation with cellular iron regulation. May play a role in chromosome segregation through establishment of sister chromatid cohesion. May induce apoptosis in collaboration with APAF1. The sequence is that of Cytosolic iron-sulfur assembly component 2A from Bos taurus (Bovine).